The chain runs to 681 residues: Proline-rich receptor-like protein kinase PERK8 (681 aa).

Residues 1–11 (MSLVPPLPILS) are compositionally biased toward pro residues. The segment at 1 to 231 (MSLVPPLPIL…TLPSSSPGKS (231 aa)) is disordered. Over 1 to 237 (MSLVPPLPIL…PGKSEVGTGG (237 aa)) the chain is Extracellular. An N-linked (GlcNAc...) asparagine glycan is attached at Asn-16. Pro residues predominate over residues 21-163 (APPPLQTQPT…SPPKPSPSTP (143 aa)). Over residues 177–191 (TSASPPSSNPTDPST) the composition is skewed to low complexity. Residues 192–201 (LAPPPTPLPV) are compositionally biased toward pro residues. The span at 214–229 (PASNNGNNTLPSSSPG) shows a compositional bias: polar residues. A glycan (N-linked (GlcNAc...) asparagine) is linked at Asn-220. A helical membrane pass occupies residues 238–258 (IVAIGVIVGLVFLSLFVMGVW). At 259–681 (FTRKRKRKDP…GSRDQSRFVP (423 aa)) the chain is on the cytoplasmic side. The Protein kinase domain occupies 339-617 (FSEKNLLGEG…SQVVRALDTL (279 aa)). Residues 345-353 (LGEGGFGCV) and Lys-367 contribute to the ATP site. Tyr-412 carries the phosphotyrosine modification. Catalysis depends on Asp-463, which acts as the Proton acceptor. A phosphoserine mark is found at Ser-467 and Ser-498. A phosphothreonine mark is found at Thr-499 and Thr-504. The residue at position 512 (Tyr-512) is a Phosphotyrosine.

It belongs to the protein kinase superfamily. Ser/Thr protein kinase family. In terms of assembly, interacts with KIPK1 and KIPK2 (via its cytosolic domain). In terms of tissue distribution, mostly expressed in seedlings, roots, inflorescence bolts and flower buds.

The protein localises to the cell membrane. The enzyme catalyses L-seryl-[protein] + ATP = O-phospho-L-seryl-[protein] + ADP + H(+). The catalysed reaction is L-threonyl-[protein] + ATP = O-phospho-L-threonyl-[protein] + ADP + H(+). In terms of biological role, could be involved in the negative regulation of root growth. This chain is Proline-rich receptor-like protein kinase PERK8 (PERK8), found in Arabidopsis thaliana (Mouse-ear cress).